A 1559-amino-acid chain; its full sequence is Fatty acid synthase alpha subunit stcJ (1559 aa).

The region spanning 68 to 147 (DTPLTAIFII…AALGEVSLGP (80 aa)) is the Carrier domain. Residue Ser-106 is modified to O-(pantetheine 4'-phosphoryl)serine. Residues 457–693 (NHTYLITGAG…SLLLTPQLAT (237 aa)) form a ketoreductase (KR) domain region. The Ketosynthase family 3 (KS3) domain maps to 873–1327 (REVFQEIVLE…QKEAQLVGVH (455 aa)). The For beta-ketoacyl synthase activity role is filled by Cys-1058. Basic and acidic residues predominate over residues 1105–1117 (VRDEQARGREPGE). Positions 1105 to 1125 (VRDEQARGREPGEMSRPTAAS) are disordered. Catalysis depends on for beta-ketoacyl synthase activity residues His-1212 and His-1253. Mg(2+) is bound at residue Asp-1432. Acetyl-CoA is bound by residues 1432-1434 (DTV), 1480-1490 (EAVFKCLQTVS), 1504-1506 (RVQ), and 1532-1534 (LSY). Position 1533 (Ser-1533) interacts with Mg(2+).

The protein belongs to the thiolase-like superfamily. Fungal fatty acid synthetase subunit alpha family. [Alpha(6)beta(6)] hexamers of two multifunctional subunits (alpha and beta).

The catalysed reaction is acetyl-CoA + n malonyl-CoA + 2n NADPH + 4n H(+) = a long-chain-acyl-CoA + n CoA + n CO2 + 2n NADP(+).. The enzyme catalyses a fatty acyl-[ACP] + malonyl-[ACP] + H(+) = a 3-oxoacyl-[ACP] + holo-[ACP] + CO2. It carries out the reaction a (3R)-hydroxyacyl-[ACP] + NADP(+) = a 3-oxoacyl-[ACP] + NADPH + H(+). It functions in the pathway mycotoxin biosynthesis; sterigmatocystin biosynthesis. In terms of biological role, fatty acid synthase alpha subunit; part of the gene cluster that mediates the biosynthesis of sterigmatocystin (ST), a polyketide-derived furanocoumarin which is part of the most toxic and carcinogenic compounds among the known mycotoxins. The first step in the biosynthesis of sterigmatocystin is the production of hexanoate by the fatty acid synthase (FAS) units stcJ and stcK. The polyketide backbone is assembled by the non-reducing polyketide synthase stcA by condensation of the starter hexanoyl-CoA and 7 malonyl-CoA extender units followed by cyclization and release of norsolorinic acid. Norsolorinic acid is the first stable intermediate in the biosynthesis of sterigmatocystin and is converted into averantin (AVN) by the ketoreductase stcE which reduces the hexanoate ketone to an alcohol. Averantin is then oxidized into 5'-hydroxyaverantin (HAVN) by the cytochrome P450 monooxygenase stcF. 5'-hydroxyaverantin is further converted to 5'-oxyaverantin (OAVN) by the 5'-hydroxyaverantin dehydrogenase stcG. The next step is the conversion of OAVN into averufin (AVF) which is catalyzed by a yet to be identified enzyme. The cytochrome P450 monooxygenase stcB and the flavin-binding monooxygenase stcW are both required for the conversion of averufin to 1-hydroxyversicolorone. The esterase stcI probably catalyzes the formation of versiconal hemiacetal acetate from 1-hydroxyversicolorone. The oxydoreductase stcN then probably catalyzes the biosynthetic step from versiconal to versicolorin B (VERB). The next step is performed by the versicolorin B desaturase stcL to produce versicolorin A (VERA). The ketoreductase stcU and the cytochrome P450 monooxygenase stcS are involved in the conversion of versicolorin A to demethylsterigmatocystin. The Baeyer-Villiger oxidas stcQ and the reductase stcR might be involved in the biosynthetic step from versicolorin A to demethylsterigmatocystin. The final step in the biosynthesis of sterigmatocystin is the methylation of demethylsterigmatocystin catalyzed by the methyltransferase stcP. In Emericella nidulans (strain FGSC A4 / ATCC 38163 / CBS 112.46 / NRRL 194 / M139) (Aspergillus nidulans), this protein is Fatty acid synthase alpha subunit stcJ.